We begin with the raw amino-acid sequence, 130 residues long: Anti-adapter protein IraD (130 aa).

The protein belongs to the GpW/Gp25 family. IraD subfamily. Interacts with RssB.

The protein localises to the cytoplasm. Its function is as follows. Inhibits RpoS proteolysis by regulating RssB activity, thereby increasing the stability of the sigma stress factor RpoS during oxidative stress. Its effect on RpoS stability is due to its interaction with RssB, which probably blocks the interaction of RssB with RpoS, and the consequent delivery of the RssB-RpoS complex to the ClpXP protein degradation pathway. In Escherichia coli O9:H4 (strain HS), this protein is Anti-adapter protein IraD.